The chain runs to 210 residues: Large ribosomal subunit protein uL4 (210 aa).

Residues 44–77 (ARQGNASSKTRSEVRGGGRKPWRQKGTGRARAGS) form a disordered region. A compositionally biased stretch (basic residues) spans 60–71 (GGRKPWRQKGTG).

It belongs to the universal ribosomal protein uL4 family. In terms of assembly, part of the 50S ribosomal subunit.

In terms of biological role, one of the primary rRNA binding proteins, this protein initially binds near the 5'-end of the 23S rRNA. It is important during the early stages of 50S assembly. It makes multiple contacts with different domains of the 23S rRNA in the assembled 50S subunit and ribosome. Its function is as follows. Forms part of the polypeptide exit tunnel. The polypeptide is Large ribosomal subunit protein uL4 (Microcystis aeruginosa (strain NIES-843 / IAM M-2473)).